The chain runs to 603 residues: T-cell surface protein tactile (603 aa).

Residues 1-21 (MGRKWTYCVVYAIIQIQFFRG) form the signal peptide. At 22–537 (AWEELFNAGD…ITVNKPRDGM (516 aa)) the chain is on the extracellular side. 2 Ig-like V-type domains span residues 24–132 (EELF…KTIV) and 139–245 (PYTQ…STTV). N-linked (GlcNAc...) asparagine glycans are attached at residues Asn43, Asn108, Asn146, Asn154, Asn164, Asn197, Asn259, Asn307, Asn324, Asn331, Asn349, Asn371, Asn416, Asn425, and Asn437. A disulfide bond links Cys46 and Cys119. Cysteines 161 and 229 form a disulfide. In terms of domain architecture, Ig-like C2-type spans 251-356 (PEILMTVENT…MWNTSSQPIT (106 aa)). Cys272 and Cys336 form a disulfide bridge. Disordered regions lie at residues 359 to 383 (LDSG…QTFP) and 403 to 482 (ENVL…WIPT). Positions 412–436 (PQTSNSSMTTKDVNYSQPSSGTDAK) are enriched in polar residues. Residues 438–450 (SSRAASSSDGGSR) are compositionally biased toward low complexity. An N-linked (GlcNAc...) asparagine glycan is attached at Asn515. A helical membrane pass occupies residues 538-558 (SWPVAVATLLFFCILLFGLGV). The Cytoplasmic segment spans residues 559–603 (RKWCQYQKEIMERPPPFKPPPPPIKYMCIQEPTGRGMPCHEMEVL).

Homodimer; disulfide-linked. Interacts with PVR.

The protein resides in the membrane. In terms of biological role, may be involved in adhesive interactions of activated T and NK cells during the late phase of the immune response. Promotes NK cell-target adhesion by interacting with PVR present on target cells. May function at a time after T and NK cells have penetrated the endothelium using integrins and selectins, when they are actively engaging diseased cells and moving within areas of inflammation. In Rattus norvegicus (Rat), this protein is T-cell surface protein tactile (Cd96).